A 634-amino-acid chain; its full sequence is Knob-associated histidine-rich protein (634 aa).

A signal peptide spans 1-34 (MKSFKNKNTLRRKKAFPVFTKILLVSFLVWVLKC). Asn42 carries N-linked (GlcNAc...) asparagine glycosylation. The segment covering 57 to 87 (AQKQHEHHHHHHHQHQHQHQAPHQAHHHHHH) has biased composition (basic residues). 2 disordered regions span residues 57–143 (AQKQ…QVFR) and 347–634 (SSVN…GCCG). Over residues 95–104 (PQVHQQVHGQ) the composition is skewed to low complexity. Residues 108 to 117 (HHHHHHHHHQ) are compositionally biased toward basic residues. 2 stretches are compositionally biased toward basic and acidic residues: residues 354–375 (KHGD…EGEK) and 396–405 (KDNEDAESVK). Basic residues predominate over residues 406 to 422 (SKKHKSHDCEKKKSKKH). Composition is skewed to basic and acidic residues over residues 423–444 (KDNE…GEKH) and 453–493 (KTNE…KKVD). The span at 494–505 (STSADNKSTNAA) shows a compositional bias: polar residues. The segment covering 509-520 (AKDKTQGGKTDK) has biased composition (basic and acidic residues). 4 tandem repeats follow at residues 540 to 549 (TKGATKEAST), 550 to 559 (SKEATKEAST), 560 to 569 (SKGATKEAST), and 570 to 579 (TEGATKGAST). The tract at residues 540-580 (TKGATKEASTSKEATKEASTSKGATKEASTTEGATKGASTT) is 4 X 10 AA tandem repeats of [TS]-[KE]-[GE]-A-T-K-[EG]-A-S-T. Over residues 567-591 (ASTTEGATKGASTTAGSTTGATTGA) the composition is skewed to low complexity. Positions 605 to 620 (AANNGEQVMSRGQAQL) are enriched in polar residues. Basic residues predominate over residues 625–634 (KKKKKRGCCG).

The protein resides in the secreted. In terms of biological role, KAHRP might mimick human histidine-rich glycoproteins to anchor host thrombospondin or a parasite analog in a binding complex with the endothelial cell receptor. The polypeptide is Knob-associated histidine-rich protein (Plasmodium falciparum (isolate FCR-3 / Gambia)).